Reading from the N-terminus, the 333-residue chain is MTTKDHSLATESPTLQQLGEFAVIDRLVRGRRQPATVLLGPGDDAALVSAGDGRTVVSTDMLVQDSHFRLDWSTPQDVGRKAIAQNAADIEAMGARATAFVVGFGAPAETPAAQASALVDGMWEEAGRIGAGIVGGDLVSCRQWVVSVTAIGDLDGRAPVLRSGAKAGSVLAVVGELGRSAAGYALWCNGIEDFAELRRRHLVPQPPYGHGAAAAAVGAQAMIDVSDGLLADLRHIAEASGVRIDLSAAALAADRDALTAAATALGTDPWPWVLSGGEDHALVACFVGPVPAGWRTIGRVLDGPARVLVDGEEWTGYAGWQSFGEPDNQGSLG.

Residues aspartate 44, serine 58, threonine 59, and aspartate 60 each coordinate Mg(2+). Histidine 67 serves as a coordination point for substrate. Mg(2+) contacts are provided by aspartate 89 and aspartate 137. ATP-binding positions include 136–137 (GD) and arginine 162. Aspartate 224 contacts Mg(2+). Serine 226 provides a ligand contact to ATP. Mg(2+) is bound at residue aspartate 227. 2 residues coordinate substrate: glutamate 278 and tryptophan 320.

It belongs to the thiamine-monophosphate kinase family.

The enzyme catalyses thiamine phosphate + ATP = thiamine diphosphate + ADP. It participates in cofactor biosynthesis; thiamine diphosphate biosynthesis; thiamine diphosphate from thiamine phosphate: step 1/1. In terms of biological role, catalyzes the ATP-dependent phosphorylation of thiamine-monophosphate (TMP) to form thiamine-pyrophosphate (TPP), the active form of vitamin B1. The chain is Thiamine-monophosphate kinase from Mycobacterium tuberculosis (strain CDC 1551 / Oshkosh).